Consider the following 974-residue polypeptide: Apical junction component 1 homolog (974 aa).

Disordered stretches follow at residues 23–137, 201–233, and 306–326; these read PGLT…PSYP, ARSS…PRHV, and CSRP…GGSY. Position 52 is a phosphoserine (Ser-52). The segment covering 69–79 has biased composition (pro residues); that stretch reads EPPPPEPAPPR. Residues 116–134 show a composition bias toward basic and acidic residues; sequence RGREAQRAVRVEGSPRREP. Ser-129 carries the phosphoserine modification. Over residues 201-216 the composition is skewed to polar residues; that stretch reads ARSSRSCAPRETTSWA. Arg-322 carries the omega-N-methylarginine modification. Ser-468, Ser-509, and Ser-512 each carry phosphoserine. Positions 539-576 are disordered; sequence DLRSVDRPTAKGWELPGGRPRQPVSTVPEGPASSRQRS. The residue at position 593 (Ser-593) is a Phosphoserine. Residues 618–661 form a disordered region; that stretch reads AGPGGATLLAPSRSPPASAGSTEEPTGSGEAADASPEPSADEDD. Over residues 623–636 the composition is skewed to low complexity; sequence ATLLAPSRSPPASA. The residue at position 749 (Arg-749) is an Asymmetric dimethylarginine; alternate. Arg-749 carries the post-translational modification Omega-N-methylarginine; alternate.

The protein localises to the apical cell membrane. Its subcellular location is the cell projection. It is found in the cilium. It localises to the cell junction. The protein resides in the adherens junction. Its function is as follows. May be involved in the control of adherens junction integrity. The chain is Apical junction component 1 homolog (Ajm1) from Mus musculus (Mouse).